Here is a 444-residue protein sequence, read N- to C-terminus: Protein kinase C and casein kinase substrate in neurons protein 1 (444 aa).

2 positions are modified to phosphoserine: Ser2 and Ser79. Positions 13-283 constitute an F-BAR domain; sequence EETTDSFWEV…AIRGADAQDD (271 aa). Positions 26-275 form a coiled coil; that stretch reads KRTVKRIDDG…QVYRELEQAI (250 aa). At Thr184 the chain carries Phosphothreonine. Residues 313-384 are disordered; that stretch reads AAKKEKQPKK…NGGSNPFDED (72 aa). The segment covering 314–324 has biased composition (basic and acidic residues); it reads AKKEKQPKKAE. Residues 336-358 show a composition bias toward polar residues; the sequence is ESTSQAGDRGSVSSYDRGQTYAT. A phosphoserine mark is found at Ser346, Ser348, Ser349, Ser361, and Ser365. Residues 385 to 444 enclose the SH3 domain; that stretch reads AKGVRVRALYDYDGQEQDELSFKAGDELTKLGEEDEQGWCRGRLDSGQLGLYPANYVEVV. Tyr394 is subject to Phosphotyrosine. Ser405 and Ser430 each carry phosphoserine.

It belongs to the PACSIN family. In terms of assembly, homodimer. May form heterooligomers with other PACSINs. Interacts with MAPT. Interacts (via SH3 domain) with SYNJ1 and WASL. Interacts (via SH3 domain) with DNM1; the interaction is reduced by DNM1 phosphorylation. Interacts with DNM2 and DNM3. Interacts with both COBL and DBNL. Identified in a complex composed of COBL, PACSIN1 and WASL. Interacts with EHD1 and EHD3. Interacts with TRPV4. Phosphorylated by casein kinase 2 (CK2) and protein kinase C (PKC).

The protein resides in the cytoplasm. It is found in the cell projection. Its subcellular location is the synapse. The protein localises to the synaptosome. It localises to the ruffle membrane. The protein resides in the membrane. It is found in the cytoplasmic vesicle membrane. Its subcellular location is the cytosol. The protein localises to the cell membrane. Binds to membranes via its F-BAR domain and mediates membrane tubulation. Plays a role in the reorganization of the microtubule cytoskeleton via its interaction with MAPT; this decreases microtubule stability and inhibits MAPT-induced microtubule polymerization. Plays a role in cellular transport processes by recruiting DNM1, DNM2 and DNM3 to membranes. Plays a role in the reorganization of the actin cytoskeleton and in neuron morphogenesis via its interaction with COBL and WASL, and by recruiting COBL to the cell cortex. Plays a role in the regulation of neurite formation, neurite branching and the regulation of neurite length. Required for normal synaptic vesicle endocytosis; this process retrieves previously released neurotransmitters to accommodate multiple cycles of neurotransmission. Required for normal excitatory and inhibitory synaptic transmission. The polypeptide is Protein kinase C and casein kinase substrate in neurons protein 1 (PACSIN1) (Bos taurus (Bovine)).